Consider the following 470-residue polypeptide: Cell division protein FtsP (470 aa).

A signal peptide (tat-type signal) is located at residues methionine 1–alanine 27. The Plastocyanin-like domain maps to valine 222 to asparagine 287.

The protein belongs to the FtsP family. In terms of processing, predicted to be exported by the Tat system. The position of the signal peptide cleavage has not been experimentally proven.

It localises to the periplasm. In terms of biological role, cell division protein that is required for growth during stress conditions. May be involved in protecting or stabilizing the divisomal assembly under conditions of stress. The chain is Cell division protein FtsP from Salmonella typhi.